The chain runs to 254 residues: Urease accessory protein UreF (254 aa).

Over residues Met-1 to Glu-11 the composition is skewed to basic and acidic residues. Residues Met-1–Asn-26 form a disordered region.

This sequence belongs to the UreF family. UreH, UreF and UreG form a complex that acts as a GTP-hydrolysis-dependent molecular chaperone, activating the urease apoprotein by helping to assemble the nickel containing metallocenter of UreC. The UreE protein probably delivers the nickel.

Its subcellular location is the cytoplasm. Required for maturation of urease via the functional incorporation of the urease nickel metallocenter. This chain is Urease accessory protein UreF, found in Helicobacter pylori (strain ATCC 700392 / 26695) (Campylobacter pylori).